The primary structure comprises 392 residues: 26S proteasome regulatory subunit 8 homolog (392 aa).

176-183 is an ATP binding site; the sequence is GPPGTGKT.

Belongs to the AAA ATPase family. The 26S proteasome consists of a 20S proteasome core and two 19S regulatory subunits. The 20S proteasome core is composed of 28 subunits that are arranged in four stacked rings, resulting in a barrel-shaped structure. The two end rings are each formed by seven alpha subunits, and the two central rings are each formed by seven beta subunits. The catalytic chamber with the active sites is on the inside of the barrel.

It localises to the cytoplasm. The protein resides in the nucleus. Acts as a regulatory subunit of the 26S proteasome which degrades poly-ubiquitinated proteins in the cytoplasm and in the nucleus. It is essential for the regulated turnover of proteins and for the removal of misfolded proteins. The proteasome is a multicatalytic proteinase complex that is characterized by its ability to cleave peptides with Arg, Phe, Tyr, Leu, and Glu adjacent to the leaving group at neutral or slightly basic pH. This chain is 26S proteasome regulatory subunit 8 homolog (RPT6), found in Encephalitozoon cuniculi (strain GB-M1) (Microsporidian parasite).